Reading from the N-terminus, the 269-residue chain is Putative hydro-lyase RL2444 (269 aa).

It belongs to the D-glutamate cyclase family.

In Rhizobium johnstonii (strain DSM 114642 / LMG 32736 / 3841) (Rhizobium leguminosarum bv. viciae), this protein is Putative hydro-lyase RL2444.